Reading from the N-terminus, the 702-residue chain is MARKIPLHRVRNIGIAAHIDAGKTTTTERILFYTGVSHKIGEVHEGAATMDWMEQEQERGITITSAATTCHWNHPKTNEQLQVNIIDTPGHVDFTIEVERSMRVLDGAVAVFCSVGGVQPQSETVWRQANKYGVPRIIYVNKMDRTGANFFNVEAQVRDRLKANPVPIQVPIGAEENFRGMVDLIKMKAYTYNLDAQAGEMYKIEDIPADLEDVVAEYREKLIEAAAESSEELMEKYLEGTELTEDEIVAGLKKRCLAMEITPMVCGTSFKNKGVQPLLDAVAMYLPAPTEVADIKGETQDGDAIIVPSTDKGEVAALAFKIMTDPFVGQLTFTRVYRGVLESGTYVLNSTKMKKERIGRLLKMHANSREEIKELYAGEIGAVVGLKDTITGDTLASEKDPVILERMDFPDPVISVAVEPKTKADQEKMGIALGKLAEEDPSFRVNTDEESGQTIISGMGELHLEILVDRMKREFKVEAEVGAPQVAYRETIRNAVKQEYKYAKQSGGKGQYGHVYLEIKPLPSGSEPNFKFNNEIKGGVVPKEYIPAVEKGCAEAMLGGILAGYPMVDIEVTLYDGSYHDVDSSEMAFKLAASMGFKQGCRSAAAGAVILEPIMKVEIETPEDYMGDVIGDCNKRRGQVQSMDDRAGIKLVTAMIPLSEMFGYSTDLRSMSQGRATYSMIFDAYQEVPRNVSEEIMKKRNG.

The region spanning 8-290 (HRVRNIGIAA…AVAMYLPAPT (283 aa)) is the tr-type G domain. Residues 17-24 (AHIDAGKT), 87-91 (DTPGH), and 141-144 (NKMD) contribute to the GTP site.

Belongs to the TRAFAC class translation factor GTPase superfamily. Classic translation factor GTPase family. EF-G/EF-2 subfamily.

It localises to the cytoplasm. Functionally, catalyzes the GTP-dependent ribosomal translocation step during translation elongation. During this step, the ribosome changes from the pre-translocational (PRE) to the post-translocational (POST) state as the newly formed A-site-bound peptidyl-tRNA and P-site-bound deacylated tRNA move to the P and E sites, respectively. Catalyzes the coordinated movement of the two tRNA molecules, the mRNA and conformational changes in the ribosome. This chain is Elongation factor G, found in Aliarcobacter butzleri (strain RM4018) (Arcobacter butzleri).